The following is a 363-amino-acid chain: Mannose-1-phosphate guanyltransferase (363 aa).

It belongs to the transferase hexapeptide repeat family.

It localises to the cytoplasm. It catalyses the reaction alpha-D-mannose 1-phosphate + GTP + H(+) = GDP-alpha-D-mannose + diphosphate. It functions in the pathway nucleotide-sugar biosynthesis; GDP-alpha-D-mannose biosynthesis; GDP-alpha-D-mannose from alpha-D-mannose 1-phosphate (GTP route): step 1/1. Functionally, involved in cell wall synthesis where it is required for glycosylation. Involved in cell cycle progression through cell-size checkpoint. Required for the correct assembly of the septum. This is Mannose-1-phosphate guanyltransferase (mpg1) from Schizosaccharomyces pombe (strain 972 / ATCC 24843) (Fission yeast).